The following is a 354-amino-acid chain: Ubiquinol oxidase 1a, mitochondrial (354 aa).

The transit peptide at 1–62 (MMITRGGAKA…RAPTIGGMRF (62 aa)) directs the protein to the mitochondrion. The segment at 68–99 (LGEKTPMKEEDANQKKTENESTGGDAAGGNNK) is disordered. Basic and acidic residues predominate over residues 72 to 86 (TPMKEEDANQKKTEN). A helical transmembrane segment spans residues 179 to 199 (AMMLETVAAVPGMVGGMLLHC). The Fe cation site is built by Glu183, Glu222, and His225. The chain crosses the membrane as a helical span at residues 241 to 261 (ALVITVQGVFFNAYFLGYLIS). 3 residues coordinate Fe cation: Glu273, Glu324, and His327.

It belongs to the alternative oxidase family. In terms of assembly, homodimer; disulfide-linked. Requires Fe cation as cofactor. Expressed in roots, stems, cotyledons, leaves and flowers. High expression in sepals.

The protein resides in the mitochondrion inner membrane. It carries out the reaction 2 a ubiquinol + O2 = 2 a ubiquinone + 2 H2O. Its activity is regulated as follows. When the two monomeric subunits are covalently linked by a S-S bond, the enzyme is essentially inactive. When the disulfide bond is reduced, its component sulfhydryls can associate with K-keto acids through formation of a thiohemiacetal, resulting in enzyme activation. Activated by glyoxylate, irrespective to the substitution found at Cys-127. That suggests the presence of a second activation site, possibly Cys-177. In terms of biological role, catalyzes the cyanide-resistant oxidation of ubiquinol and the reduction of molecular oxygen to water, but does not translocate protons and consequently is not linked to oxidative phosphorylation. Increases respiration when the cytochrome respiratory pathway is restricted, or in response to low temperatures. In Arabidopsis thaliana (Mouse-ear cress), this protein is Ubiquinol oxidase 1a, mitochondrial (AOX1A).